A 334-amino-acid chain; its full sequence is Methionyl-tRNA formyltransferase (334 aa).

111-114 (SLLP) contacts (6S)-5,6,7,8-tetrahydrofolate.

The protein belongs to the Fmt family.

It carries out the reaction L-methionyl-tRNA(fMet) + (6R)-10-formyltetrahydrofolate = N-formyl-L-methionyl-tRNA(fMet) + (6S)-5,6,7,8-tetrahydrofolate + H(+). Functionally, attaches a formyl group to the free amino group of methionyl-tRNA(fMet). The formyl group appears to play a dual role in the initiator identity of N-formylmethionyl-tRNA by promoting its recognition by IF2 and preventing the misappropriation of this tRNA by the elongation apparatus. This Cyanothece sp. (strain PCC 7425 / ATCC 29141) protein is Methionyl-tRNA formyltransferase.